The sequence spans 737 residues: tRNA (guanine(27)-N(2))-dimethyltransferase (737 aa).

Positions 1–10 (MENMAEEELL) are enriched in acidic residues. The disordered stretch occupies residues 1 to 65 (MENMAEEELL…ASAPVPAPAL (65 aa)). Over residues 17 to 49 (VVQVPVPTPTPDSARVPAPAPDSAPVSASTPAP) the composition is skewed to low complexity. Threonine 24 bears the Phosphothreonine mark. Residues 50–62 (ASAPTPASAPVPA) are compositionally biased toward pro residues. Serine 72 bears the Phosphoserine mark. Residues 141–145 (HKLHR) carry the Nucleolar localization signal motif. Residues 190–212 (YHCIICSATITRRTDMLGHVRRH) form a C2H2-type zinc finger. One can recognise a Trm1 methyltransferase domain in the interval 233–692 (EILKEADTDV…APLMQFKSIL (460 aa)). S-adenosyl-L-methionine-binding residues include arginine 266, aspartate 313, aspartate 363, and alanine 364. Cysteine 494, cysteine 497, cysteine 519, and cysteine 521 together coordinate Zn(2+). Lysine 589 participates in a covalent cross-link: Glycyl lysine isopeptide (Lys-Gly) (interchain with G-Cter in SUMO2). Serine 616 is modified (phosphoserine).

Belongs to the class I-like SAM-binding methyltransferase superfamily. Trm1 family.

The protein resides in the nucleus. Its subcellular location is the nucleolus. It carries out the reaction guanosine(27) in tRNA(Tyr) + 2 S-adenosyl-L-methionine = N(2)-dimethylguanosine(27) in tRNA(Tyr) + 2 S-adenosyl-L-homocysteine + 2 H(+). In terms of biological role, specifically dimethylates a single guanine residue at position 27 of tRNA(Tyr) using S-adenosyl-L-methionine as donor of the methyl groups. Dimethylation at position 27 of tRNA(Tyr) is required for efficient translation of tyrosine codons. Also required to maintain 3-(3-amino-3-carboxypropyl)uridine (acp3U) in the D-loop of several cytoplasmic tRNAs. This is tRNA (guanine(27)-N(2))-dimethyltransferase (TRMT1L) from Bos taurus (Bovine).